Consider the following 57-residue polypeptide: Large ribosomal subunit protein bL32 (57 aa).

The disordered stretch occupies residues 1–38 (MAVQQNKPTRSKRGMRRSHDALTAVTSLSVDQTSGEKH). Positions 24–33 (AVTSLSVDQT) are enriched in polar residues.

Belongs to the bacterial ribosomal protein bL32 family.

The polypeptide is Large ribosomal subunit protein bL32 (Enterobacter sp. (strain 638)).